The sequence spans 134 residues: Small ribosomal subunit protein bS16 (134 aa).

The tract at residues 115 to 134 (AKLRRRQAKKAAEAAGSAEG) is disordered.

The protein belongs to the bacterial ribosomal protein bS16 family.

The sequence is that of Small ribosomal subunit protein bS16 from Chlorobaculum tepidum (strain ATCC 49652 / DSM 12025 / NBRC 103806 / TLS) (Chlorobium tepidum).